The sequence spans 298 residues: dTDP-4-dehydrorhamnose reductase (298 aa).

NADH is bound by residues 10 to 12, 35 to 36, and 59 to 61; these read GQV, DL, and AYT. NADPH is bound by residues 11–12, 35–36, 59–61, and tyrosine 98; these read QV, DL, and AYT. Position 100–101 (100–101) interacts with dTDP-beta-L-rhamnose; sequence TD. NADH contacts are provided by tyrosine 124 and lysine 128. NADPH-binding residues include tyrosine 124 and lysine 128. The active-site Proton donor/acceptor is tyrosine 124. Position 149 (tryptophan 149) interacts with dTDP-beta-L-rhamnose.

The protein belongs to the dTDP-4-dehydrorhamnose reductase family. In terms of assembly, homodimer. Requires Mg(2+) as cofactor.

It carries out the reaction dTDP-beta-L-rhamnose + NADP(+) = dTDP-4-dehydro-beta-L-rhamnose + NADPH + H(+). It functions in the pathway carbohydrate biosynthesis; dTDP-L-rhamnose biosynthesis. The protein operates within bacterial outer membrane biogenesis; LPS O-antigen biosynthesis. Its function is as follows. Involved in the biosynthesis of the dTDP-L-rhamnose which is an important component of lipopolysaccharide (LPS). Catalyzes the reduction of dTDP-6-deoxy-L-lyxo-4-hexulose to yield dTDP-L-rhamnose. The protein is dTDP-4-dehydrorhamnose reductase of Burkholderia thailandensis (strain ATCC 700388 / DSM 13276 / CCUG 48851 / CIP 106301 / E264).